Here is a 156-residue protein sequence, read N- to C-terminus: Small ribosomal subunit protein uS7 (156 aa).

This sequence belongs to the universal ribosomal protein uS7 family. Part of the 30S ribosomal subunit. Contacts proteins S9 and S11.

In terms of biological role, one of the primary rRNA binding proteins, it binds directly to 16S rRNA where it nucleates assembly of the head domain of the 30S subunit. Is located at the subunit interface close to the decoding center, probably blocks exit of the E-site tRNA. The sequence is that of Small ribosomal subunit protein uS7 from Natranaerobius thermophilus (strain ATCC BAA-1301 / DSM 18059 / JW/NM-WN-LF).